We begin with the raw amino-acid sequence, 317 residues long: 2,3-dihydroxyphenylpropionate/2,3-dihydroxicinnamic acid 1,2-dioxygenase (317 aa).

H115 functions as the Proton donor in the catalytic mechanism. The active-site Proton acceptor is H179.

It belongs to the LigB/MhpB extradiol dioxygenase family. Homotetramer. It depends on Fe(2+) as a cofactor.

It catalyses the reaction 3-(2,3-dihydroxyphenyl)propanoate + O2 = (2Z,4E)-2-hydroxy-6-oxonona-2,4-dienedioate + H(+). The enzyme catalyses (2E)-3-(2,3-dihydroxyphenyl)prop-2-enoate + O2 = (2Z,4E,7E)-2-hydroxy-6-oxonona-2,4,7-trienedioate + H(+). Its pathway is aromatic compound metabolism; 3-phenylpropanoate degradation. Catalyzes the non-heme iron(II)-dependent oxidative cleavage of 2,3-dihydroxyphenylpropionic acid and 2,3-dihydroxicinnamic acid into 2-hydroxy-6-ketononadienedioate and 2-hydroxy-6-ketononatrienedioate, respectively. This chain is 2,3-dihydroxyphenylpropionate/2,3-dihydroxicinnamic acid 1,2-dioxygenase, found in Paraburkholderia phymatum (strain DSM 17167 / CIP 108236 / LMG 21445 / STM815) (Burkholderia phymatum).